Reading from the N-terminus, the 396-residue chain is Elongation factor Tu (396 aa).

The 197-residue stretch at 10-206 (KPHVNVGTIG…ALDTYIPEPE (197 aa)) folds into the tr-type G domain. Positions 19 to 26 (GHVDHGKT) are G1. Position 19–26 (19–26 (GHVDHGKT)) interacts with GTP. Residue threonine 26 participates in Mg(2+) binding. The tract at residues 60-64 (GITIN) is G2. Residues 81–84 (DCPG) are G3. GTP contacts are provided by residues 81 to 85 (DCPGH) and 136 to 139 (NKAD). Residues 136–139 (NKAD) form a G4 region. The segment at 174-176 (SAL) is G5.

This sequence belongs to the TRAFAC class translation factor GTPase superfamily. Classic translation factor GTPase family. EF-Tu/EF-1A subfamily. Monomer.

It is found in the cytoplasm. It carries out the reaction GTP + H2O = GDP + phosphate + H(+). Functionally, GTP hydrolase that promotes the GTP-dependent binding of aminoacyl-tRNA to the A-site of ribosomes during protein biosynthesis. The sequence is that of Elongation factor Tu from Thiobacillus denitrificans (strain ATCC 25259 / T1).